The chain runs to 307 residues: Methionyl-tRNA formyltransferase (307 aa).

108–111 (SLLP) contributes to the (6S)-5,6,7,8-tetrahydrofolate binding site.

This sequence belongs to the Fmt family.

It catalyses the reaction L-methionyl-tRNA(fMet) + (6R)-10-formyltetrahydrofolate = N-formyl-L-methionyl-tRNA(fMet) + (6S)-5,6,7,8-tetrahydrofolate + H(+). In terms of biological role, attaches a formyl group to the free amino group of methionyl-tRNA(fMet). The formyl group appears to play a dual role in the initiator identity of N-formylmethionyl-tRNA by promoting its recognition by IF2 and preventing the misappropriation of this tRNA by the elongation apparatus. The protein is Methionyl-tRNA formyltransferase of Xylella fastidiosa (strain M12).